The following is a 497-amino-acid chain: Vacuolar fusion protein CCZ1 homolog B (497 aa).

The segment at Gly244–Thr284 is disordered.

The protein belongs to the CCZ1 family. Interacts with MON1.

It localises to the endosome. The protein resides in the prevacuolar compartment. Its function is as follows. Plays an important role in membrane trafficking through the secretory apparatus. In complex with MON1, acts as a guanine exchange factor (GEF) for RABG3F of the RAB7 protein family. Promotes the exchange of GDP to GTP, converting RABG3F from an inactive GDP-bound form into an active GTP-bound form. The RABG3F active form is involved in protein trafficking from prevacuolar compartments (PVCs) to vacuoles. May serve as a linker between Rab5 and Rab7 protein families in PVCs and mediate PVC maturation. The chain is Vacuolar fusion protein CCZ1 homolog B from Arabidopsis thaliana (Mouse-ear cress).